Reading from the N-terminus, the 134-residue chain is Ribonuclease VapC1 (134 aa).

The 130-residue stretch at tyrosine 3–tryptophan 132 folds into the PINc domain. Residues aspartate 6 and aspartate 99 each contribute to the Mg(2+) site.

It belongs to the PINc/VapC protein family. Mg(2+) is required as a cofactor.

Functionally, toxic component of a type II toxin-antitoxin (TA) system. Acts as an RNase, its toxic effect is neutralized by VapB1 antitoxin. This chain is Ribonuclease VapC1, found in Haemophilus influenzae (strain ATCC 51907 / DSM 11121 / KW20 / Rd).